Consider the following 60-residue polypeptide: Potassium channel toxin alpha-KTx 29.3 (60 aa).

A signal peptide spans M1–A28. Intrachain disulfides connect C32–C51, C40–C56, and C44–C58.

The protein belongs to the short scorpion toxin superfamily. Potassium channel inhibitor family. Alpha-KTx 29 subfamily. In terms of tissue distribution, expressed by the venom gland.

It is found in the secreted. Its function is as follows. Weakly inhibits the Kv1.3/KCNA3 channel (1 uM of thetoxin inhibits currents by 13.2%) and Kv7.1/KCNQ1 channel (10 uM of the toxin inhibits currents by 27.7%). The chain is Potassium channel toxin alpha-KTx 29.3 from Lychas mucronatus (Chinese swimming scorpion).